A 63-amino-acid chain; its full sequence is Large ribosomal subunit protein uL30 (63 aa).

It belongs to the universal ribosomal protein uL30 family. Part of the 50S ribosomal subunit.

This Rickettsia prowazekii (strain Madrid E) protein is Large ribosomal subunit protein uL30.